The primary structure comprises 282 residues: 2,3,4,5-tetrahydropyridine-2,6-dicarboxylate N-succinyltransferase (282 aa).

R109 and D146 together coordinate substrate.

The protein belongs to the transferase hexapeptide repeat family. As to quaternary structure, homotrimer.

The protein resides in the cytoplasm. The catalysed reaction is (S)-2,3,4,5-tetrahydrodipicolinate + succinyl-CoA + H2O = (S)-2-succinylamino-6-oxoheptanedioate + CoA. It functions in the pathway amino-acid biosynthesis; L-lysine biosynthesis via DAP pathway; LL-2,6-diaminopimelate from (S)-tetrahydrodipicolinate (succinylase route): step 1/3. In Bartonella quintana (strain Toulouse) (Rochalimaea quintana), this protein is 2,3,4,5-tetrahydropyridine-2,6-dicarboxylate N-succinyltransferase.